Reading from the N-terminus, the 710-residue chain is Pentatricopeptide repeat-containing protein At5g39680 (710 aa).

Position 2 is an N-acetylserine (Ser-2). PPR repeat units lie at residues 35–64, 68–98, 99–133, 135–169, 170–200, 201–235, 236–270, 271–301, 302–336, 337–371, 372–402, 403–437, 438–473, and 474–504; these read NELLKVCANSSYLRIGESIHAHLIVTNQSS, DAYQINSLINLYVKCRETVRARKLFDLMPER, NVVSWCAMMKGYQNSGFDFEVLKLFKSMFFSGESR, NEFVATVVFKSCSNSGRIEEGKQFHGCFLKYGLIS, HEFVRNTLVYMYSLCSGNGEAIRVLDDLPYC, DLSVFSSALSGYLECGAFKEGLDVLRKTANEDFVW, NNLTYLSSLRLFSNLRDLNLALQVHSRMVRFGFNA, EVEACGALINMYGKCGKVLYAQRVFDDTHAQ, NIFLNTTIMDAYFQDKSFEEALNLFSKMDTKEVPP, NEYTFAILLNSIAELSLLKQGDLLHGLVLKSGYRN, HVMVGNALVNMYAKSGSIEDARKAFSGMTFR, DIVTWNTMISGCSHHGLGREALEAFDRMIFTGEIP, NRITFIGVLQACSHIGFVEQGLHYFNQLMKKFDVQP, and DIQHYTCIVGLLSKAGMFKDAEDFMRTAPIE. Residues 509–584 form a type E motif region; that stretch reads AWRTLLNACY…EPGVSWIGIR (76 aa). The segment at 585–615 is type E(+) motif; the sequence is NQTHVFLAEDNQHPEITLIYAKVKEVMSKIK. The tract at residues 616-710 is type DYW motif; it reads PLGYSPDVAG…DGQCSCCDYW (95 aa).

The protein belongs to the PPR family. PCMP-H subfamily.

This chain is Pentatricopeptide repeat-containing protein At5g39680 (EMB2744), found in Arabidopsis thaliana (Mouse-ear cress).